Reading from the N-terminus, the 751-residue chain is MAFQAVCILVGVFVCSTYVKGSPQPQARVYLTFDELRETKTSEYFSLSQYPLDYRILLMDEDQDRMYVGSKDHILSLNINNISQEPLSVFWPASAIKVEECKMAGKDPTHGCGNFVRVIQAFNRTHLYVCGSGAFSPVCAYLNRGRRSEDQVFMIDSKCESGKGRCSFNPNVNTVSVMINEELFSGMYIDFMGTDAAIFRSLTKRNAVRTDQHNSKWLSEPMFVDAHVIPDGTDPNDAKVYFFFKEKLTDNSRSTKQIHSMIARICPNDTGGLRSLVNKWTTFLKARLVCSVTDEDGPETHFDELEDVFLLEMDNPRTTLVYGIFTTSSSVFKGSAVCVYHFSDIQTVFNGPFAHKEGPNHQLISYQGRIPYPRPGTCPGGAFTPNMRTTKEFPDDVVTFIRNHPLMYNSIYPVHRRPLIVRIGTDYKYTKIAVDRVNAADGTYNVLFLGTDRGTVQKVVVLPTNSSARSELILEELEVFKNHAPITTMKISSKKQQLYVSSNEGLAQVSLHRCHIYGSACADCCLARDPYCAWDGHSCSRFYPTGKRRSRRQDVRHGNPLTQCRGFNLKAYRNAAEIVQYGVKNNTTFLECAPKSPQASIKWLLQKDKDRRKEVKLNERIIATSQGLLIRSVQDSDQGLYHCIATENSFKQTIAKINFKVLDSEMVAVVTDKWSPWTWASSVRALPFHPKDIMGAFSHSEMQMINQYCKDTRQQHQQGEESQKMRGDYGKLKALINSRKSRNRRNQLPES.

The signal sequence occupies residues 1–21 (MAFQAVCILVGVFVCSTYVKG). The 484-residue stretch at 28–511 (RVYLTFDELR…SNEGLAQVSL (484 aa)) folds into the Sema domain. N-linked (GlcNAc...) asparagine glycosylation occurs at N81. A disulfide bond links C101 and C112. A glycan (N-linked (GlcNAc...) asparagine) is linked at N123. Cystine bridges form between C130–C139, C266–C378, and C290–C338. The N-linked (GlcNAc...) asparagine glycan is linked to N268. N-linked (GlcNAc...) asparagine glycosylation occurs at N465. Residues C514 and C532 are joined by a disulfide bond. An Ig-like C2-type domain is found at 571 to 655 (AYRNAAEIVQ…TENSFKQTIA (85 aa)). N585 and N586 each carry an N-linked (GlcNAc...) asparagine glycan. An intrachain disulfide couples C592 to C643. A compositionally biased stretch (basic and acidic residues) spans 712-731 (TRQQHQQGEESQKMRGDYGK). Residues 712–751 (TRQQHQQGEESQKMRGDYGKLKALINSRKSRNRRNQLPES) form a disordered region.

It belongs to the semaphorin family. As to quaternary structure, interacts with PLXND1.

It is found in the secreted. Functionally, binds to plexin family members and plays an important role in the regulation of developmental processes. Required for normal cardiovascular development during embryogenesis. Functions as attractant for growing axons, and thereby plays an important role in axon growth and axon guidance. This Bos taurus (Bovine) protein is Semaphorin-3C (SEMA3C).